The primary structure comprises 717 residues: MPNTSFPVPSKFPLGPPAAVCGSGETLRPAPPSGGTMKAAEEEHYSYVSPSVTSTLPLPTAHSALPAACHDLQTSTPGISAVPSANHPPSYGGAVDSGPSGYFLSSGNTRPNGAPTLESPRIEITSYLGLHHGSGQFFHDVEVEDVLPSCKRSPSTATLHLPSLEAYRDPSCLSPASSLSSRSCNSEASSYESNYSYPYASPQTSPWQSPCVSPKTTDPEEGFPRSLGACHLLGSPRHSPSTSPRASITEESWLGARGSRPTSPCNKRKYSLNGRQPSCSPHHSPTPSPHGSPRVSVTEDTWLGNTTQYTSSAIVAAINALTTDSTLDLGDGVPIKSRKTALEHAPSVALKVEPAGEDLGTTPPTSDFPPEEYTFQHLRKGAFCEQYLSVPQASYQWAKPKSLSPTSYMSPSLPALDWQLPSHSGPYELRIEVQPKSHHRAHYETEGSRGAVKASAGGHPIVQLHGYLENEPLTLQLFIGTADDRLLRPHAFYQVHRITGKTVSTTSHEIILSNTKVLEIPLLPENNMRAIIDCAGILKLRNSDIELRKGETDIGRKNTRVRLVFRVHIPQPNGRTLSLQVASNPIECSQRSAQELPLVEKQSTDSYPVIGGKKMVLSGHNFLQDSKVIFVEKAPDGHHVWEMEAKTDRDLCKPNSLVVEIPPFRNQRITSPAQVSFYVCNGKRKRSQYQRFTYLPANGNSVFLTLSSESELRGGFY.

Residues 1–38 (MPNTSFPVPSKFPLGPPAAVCGSGETLRPAPPSGGTMK) are disordered. The tract at residues 120–125 (PRIEIT) is calcineurin-binding. The tract at residues 128 to 220 (LGLHHGSGQF…CVSPKTTDPE (93 aa)) is transactivation domain A (TAD-A). The segment at 202–298 (PQTSPWQSPC…PHGSPRVSVT (97 aa)) is disordered. Over residues 203-216 (QTSPWQSPCVSPKT) the composition is skewed to polar residues. Tandem repeats lie at residues 205–221 (SPWQSPCVSPKTTDPEE) and 235–251 (SPRHSPSTSPRASITEE). A 3 X SP repeats region spans residues 205 to 300 (SPWQSPCVSP…GSPRVSVTED (96 aa)). Phosphoserine is present on residues Ser235 and Ser239. Residues 238 to 250 (HSPSTSPRASITE) show a composition bias toward polar residues. At Ser247 the chain carries Phosphoserine; by PKA. Positions 267 to 269 (KRK) match the Nuclear localization signal motif. A phosphoserine; by PKA mark is found at Ser271 and Ser296. The stretch at 284 to 300 (SPTPSPHGSPRVSVTED) is repeat 3. Residues 312–323 (SAIVAAINALTT) carry the Nuclear export signal motif. One can recognise an RHD domain in the interval 411 to 593 (PSLPALDWQL…NPIECSQRSA (183 aa)). The DNA-binding element occupies 440–447 (RAHYETEG). The Nuclear localization signal signature appears at 683 to 685 (KRK).

Member of the multicomponent NFATC transcription complex that consists of at least two components, a pre-existing cytoplasmic component NFATC2 and an inducible nuclear component NFATC1. Other members such as NFATC4, NFATC3 or members of the activating protein-1 family, MAF, GATA4 and Cbp/p300 can also bind the complex. NFATC proteins bind to DNA as monomers. Interacts with HOMER2 and HOMER3; this interaction may compete with calcineurin/PPP3CA-binding and hence prevent NFATC1 dephosphorylation and activation. Interacts with TLE6/GRG6. Post-translationally, phosphorylated by NFATC-kinase and GSK3B; phosphorylation induces NFATC1 nuclear exit and dephosphorylation by calcineurin promotes nuclear import. Phosphorylation by PKA and DYRK2 negatively modulates nuclear accumulation, and promotes subsequent phosphorylation by GSK3B or casein kinase 1. Expressed in the submandibular gland (at protein level). Expressed in basal epidermal cells (at protein level). Expressed in spleen, skeletal muscle and skin. Express in the lung and thymus. Weakly expressed in heart, brain, liver and kidney. Not expressed in testis. Expressed in osteoclasts. Also expressed during TNFSF11/RANKL-induced differentiation of bone marrow-derived macrophages to osteoclasts.

It is found in the cytoplasm. The protein resides in the nucleus. Functionally, plays a role in the inducible expression of cytokine genes in T-cells, especially in the induction of the IL-2 or IL-4 gene transcription. Also controls gene expression in embryonic cardiac cells. Could regulate not only the activation and proliferation but also the differentiation and programmed death of T-lymphocytes as well as lymphoid and non-lymphoid cells. Required for osteoclastogenesis and regulates many genes important for osteoclast differentiation and function. The sequence is that of Nuclear factor of activated T-cells, cytoplasmic 1 (Nfatc1) from Mus musculus (Mouse).